Here is a 334-residue protein sequence, read N- to C-terminus: MGSIGSMGKPIEGFLVAAIQFPVPIVNSRKDIDHNIESIIRTLHATKAGYPGVELIIFPEYSTQGLNTAKWLSEEFLLDVPGKETELYAKACKEAKVYGVFSIMERNPDSNKNPYNTAIIIDPQGKIILKYRKLFPWNPIEPWYPGDLGMPVCEGPGGSKLAVCICHDGMIPELAREAAYKGCNVYIRISGYSTQVNDQWILTNRSNAWHNLMYTVSVNLAGYDNVFYYFGEGQICNFDGTTLVQGHRNPWEIVTGEIYPKMADNARLSWGLENNIYNLGHRGYVAKPGGEHDAGLTYIKDLAAGKYKLPWEDHMKIKDGSVYGYPTTGGRFGK.

The CN hydrolase domain occupies 14-260 (FLVAAIQFPV…WEIVTGEIYP (247 aa)). Glu-60 serves as the catalytic Proton acceptor. Lys-133 functions as the Proton donor in the catalytic mechanism. The Nucleophile role is filled by Cys-166.

Belongs to the carbon-nitrogen hydrolase superfamily. Aliphatic amidase family.

It carries out the reaction formamide + H2O = formate + NH4(+). In terms of biological role, is an aliphatic amidase with a restricted substrate specificity, as it only hydrolyzes formamide. This chain is Formamidase, found in Helicobacter pylori (strain Shi470).